Here is a 396-residue protein sequence, read N- to C-terminus: GDSL esterase/lipase ACHE (396 aa).

The signal sequence occupies residues methionine 1–aspartate 31. The active-site Nucleophile is serine 49. Residues asparagine 108, asparagine 126, asparagine 151, asparagine 196, and asparagine 339 are each glycosylated (N-linked (GlcNAc...) asparagine). Catalysis depends on residues aspartate 359 and histidine 362.

Belongs to the 'GDSL' lipolytic enzyme family.

It localises to the secreted. Its function is as follows. Esterase that can hydrolyze acetylthiocholine and propionylthiocholine in vitro. Substrate preference is propionylthiocholine &gt; acetylthiocholine. Possesses extremely low activity against butyrylthiocholine. The chain is GDSL esterase/lipase ACHE from Zea mays (Maize).